The primary structure comprises 417 residues: MLEQMGIAAKQASYKLAQLSSREKNRVLEKIADELEAQSESILNANAQDVADARANGLSEAMLDRLALTPARLKGIADDVRQVCNLADPVGQVIDGGVLDSGLRLERRRVPLGVIGVIYEARPNVTVDVASLCLKTGNAVILRGGKETCRTNAATVAVIQDALKSCGLPAGAVQAIDNPDRALVSEMLRMDKYIDMLIPRGGAGLHKLCREQSTIPVITGGIGVCHIYVDESAEIAEALKVIVNAKTQRPSTCNTVETLLVNKNIADSFLPALSKQMAESSVTLHADVAALAQLQAGPAKVVAVKAEEYDDEFLSLDLNVKIVSDLDDAIAHIREHGTQHSDAILTRDMRNAQRFVNEVDSSAVYVNASTRFTDGGQFGLGAEVAVSTQKLHARGPMGLEALTTYKWIGIGDYTIRA.

This sequence belongs to the gamma-glutamyl phosphate reductase family.

It is found in the cytoplasm. It carries out the reaction L-glutamate 5-semialdehyde + phosphate + NADP(+) = L-glutamyl 5-phosphate + NADPH + H(+). The protein operates within amino-acid biosynthesis; L-proline biosynthesis; L-glutamate 5-semialdehyde from L-glutamate: step 2/2. Functionally, catalyzes the NADPH-dependent reduction of L-glutamate 5-phosphate into L-glutamate 5-semialdehyde and phosphate. The product spontaneously undergoes cyclization to form 1-pyrroline-5-carboxylate. The polypeptide is Gamma-glutamyl phosphate reductase (Escherichia coli O127:H6 (strain E2348/69 / EPEC)).